A 240-amino-acid chain; its full sequence is Endonuclease V (240 aa).

Residues Asp-46 and Asp-116 each contribute to the Mg(2+) site.

Belongs to the endonuclease V family. Mg(2+) serves as cofactor.

It localises to the cytoplasm. The enzyme catalyses Endonucleolytic cleavage at apurinic or apyrimidinic sites to products with a 5'-phosphate.. Its function is as follows. DNA repair enzyme involved in the repair of deaminated bases. Selectively cleaves double-stranded DNA at the second phosphodiester bond 3' to a deoxyinosine leaving behind the intact lesion on the nicked DNA. This chain is Endonuclease V, found in Rhodospirillum centenum (strain ATCC 51521 / SW).